The chain runs to 254 residues: MGIIESIILGIVEGLTEFLPVSSTGHLILVSKLLGLEQTDAHKAFEVAIQSGAILAVVFLYREKLTHSIDLWKRLIIAFIPTGILGFLLYKIIKGLFSPYIVSIMLIVGGLVFIAVEFFYKKSEHQIDDILKIPYYKAFFIGVFQSIAMIPGTSRSGATIIGGLLLGLDRKTAAEFSFLLAVPTMFAATSYDIMKNYHHFHIENWIALLTGFVTAFVFAVLAIKLFIGFVSRYNFVPFGIYRIILGFIFLLFVL.

The next 8 helical transmembrane spans lie at 1-21 (MGII…FLPV), 41-61 (AHKA…VFLY), 75-95 (LIIA…IIKG), 96-116 (LFSP…FIAV), 130-150 (ILKI…IAMI), 174-194 (AEFS…YDIM), 210-230 (TGFV…IGFV), and 234-254 (NFVP…LFVL).

Belongs to the UppP family.

The protein localises to the cell inner membrane. The catalysed reaction is di-trans,octa-cis-undecaprenyl diphosphate + H2O = di-trans,octa-cis-undecaprenyl phosphate + phosphate + H(+). In terms of biological role, catalyzes the dephosphorylation of undecaprenyl diphosphate (UPP). Confers resistance to bacitracin. The chain is Undecaprenyl-diphosphatase from Persephonella marina (strain DSM 14350 / EX-H1).